Reading from the N-terminus, the 503-residue chain is WD repeat-containing protein 55 homolog (503 aa).

2 disordered regions span residues 1 to 21 and 35 to 132; these read MHTH…DLDD and ALVG…DDLD. Composition is skewed to acidic residues over residues 12–21, 40–50, and 78–96; these read DADELDDLDD, DVSDSDIDEHD, and NAED…DEAE. WD repeat units follow at residues 157–196, 201–242, 244–282, 285–324, 327–366, and 411–450; these read KLED…NKLL, VHSK…KLYE, AHDD…PIFE, EVED…LYVQ, PYEE…YHCD, and QHNM…DFGD. Residues 483–503 are disordered; that stretch reads TKEDEDNADNNDAAAGPSNSA.

The protein belongs to the WD repeat WDR55 family.

The sequence is that of WD repeat-containing protein 55 homolog from Drosophila persimilis (Fruit fly).